The following is a 327-amino-acid chain: Aspartate--ammonia ligase (327 aa).

It belongs to the class-II aminoacyl-tRNA synthetase family. AsnA subfamily.

It is found in the cytoplasm. The enzyme catalyses L-aspartate + NH4(+) + ATP = L-asparagine + AMP + diphosphate + H(+). Its pathway is amino-acid biosynthesis; L-asparagine biosynthesis; L-asparagine from L-aspartate (ammonia route): step 1/1. The protein is Aspartate--ammonia ligase of Bacillus cereus (strain ATCC 10987 / NRS 248).